Here is a 272-residue protein sequence, read N- to C-terminus: Ribosomal RNA small subunit methyltransferase A (272 aa).

S-adenosyl-L-methionine-binding residues include Asn-27, Leu-29, Gly-54, Glu-75, Asp-97, and Asn-117.

Belongs to the class I-like SAM-binding methyltransferase superfamily. rRNA adenine N(6)-methyltransferase family. RsmA subfamily.

It localises to the cytoplasm. It carries out the reaction adenosine(1518)/adenosine(1519) in 16S rRNA + 4 S-adenosyl-L-methionine = N(6)-dimethyladenosine(1518)/N(6)-dimethyladenosine(1519) in 16S rRNA + 4 S-adenosyl-L-homocysteine + 4 H(+). In terms of biological role, specifically dimethylates two adjacent adenosines (A1518 and A1519) in the loop of a conserved hairpin near the 3'-end of 16S rRNA in the 30S particle. May play a critical role in biogenesis of 30S subunits. This chain is Ribosomal RNA small subunit methyltransferase A, found in Malacoplasma penetrans (strain HF-2) (Mycoplasma penetrans).